The sequence spans 167 residues: Cyclic pyranopterin monophosphate synthase 2 (167 aa).

The disordered stretch occupies residues 1–23; it reads MARASGASDYRSGELSHQDERGA. Residues 11-23 are compositionally biased toward basic and acidic residues; that stretch reads RSGELSHQDERGA. Residues 86–88 and 122–123 each bind substrate; these read LCH and ME. Asp137 is an active-site residue.

It belongs to the MoaC family. As to quaternary structure, homohexamer; trimer of dimers.

The enzyme catalyses (8S)-3',8-cyclo-7,8-dihydroguanosine 5'-triphosphate = cyclic pyranopterin phosphate + diphosphate. Its pathway is cofactor biosynthesis; molybdopterin biosynthesis. Functionally, catalyzes the conversion of (8S)-3',8-cyclo-7,8-dihydroguanosine 5'-triphosphate to cyclic pyranopterin monophosphate (cPMP). In Mycobacterium bovis (strain ATCC BAA-935 / AF2122/97), this protein is Cyclic pyranopterin monophosphate synthase 2 (moaC2).